Reading from the N-terminus, the 198-residue chain is MASGNARIGKPAPDFKATAVVDGAFKEVKLSDYKGKYVVLFFYPLDFTFVCPTEIIAFSNRAEDFRKLGCEVLGVSVDSQFTHLAWINTPRKEGGLGPLNIPLLADVTRRLSEDYGVLKTDEGIAYRGLFIIDGKGVLRQITVNDLPVGRSVDEALRLVQAFQYTDEHGEVCPAGWKPGSDTIKPNVDDSKEYFSKHN.

Position 2 is an N-acetylalanine (Ala2). The 159-residue stretch at 6–164 folds into the Thioredoxin domain; that stretch reads ARIGKPAPDF…ALRLVQAFQY (159 aa). The Cysteine sulfenic acid (-SOH) intermediate role is filled by Cys51. Ser112 carries the post-translational modification Phosphoserine. The residue at position 182 (Thr182) is a Phosphothreonine. At Lys196 the chain carries N6-acetyllysine.

This sequence belongs to the peroxiredoxin family. AhpC/Prx1 subfamily. As to quaternary structure, homodimer; disulfide-linked, upon oxidation. 5 homodimers assemble to form a ring-like decamer. Interacts with TIPIN. Post-translationally, the enzyme can be inactivated by further oxidation of the cysteine sulfenic acid (C(P)-SOH) to sulphinic acid (C(P)-SO2H) instead of its condensation to a disulfide bond. It can be reactivated by forming a transient disulfide bond with sulfiredoxin SRXN1, which reduces the cysteine sulfinic acid in an ATP- and Mg-dependent manner. In terms of processing, acetylation increases resistance to transition to high molecular-mass complexes. Deacetylated by HDAC6 which decreases reducing activity.

The protein localises to the cytoplasm. It carries out the reaction a hydroperoxide + [thioredoxin]-dithiol = an alcohol + [thioredoxin]-disulfide + H2O. Functionally, thiol-specific peroxidase that catalyzes the reduction of hydrogen peroxide and organic hydroperoxides to water and alcohols, respectively. Plays a role in cell protection against oxidative stress by detoxifying peroxides and as sensor of hydrogen peroxide-mediated signaling events. Might participate in the signaling cascades of growth factors and tumor necrosis factor-alpha by regulating the intracellular concentrations of H(2)O(2). The polypeptide is Peroxiredoxin-2 (PRDX2) (Macaca fascicularis (Crab-eating macaque)).